Here is an 804-residue protein sequence, read N- to C-terminus: Leucine--tRNA ligase (804 aa).

A 'HIGH' region motif is present at residues 39–50 (PYPSGAGLHVGH). Residues 580 to 584 (KMSKS) carry the 'KMSKS' region motif. Lysine 583 lines the ATP pocket.

It belongs to the class-I aminoacyl-tRNA synthetase family.

Its subcellular location is the cytoplasm. It carries out the reaction tRNA(Leu) + L-leucine + ATP = L-leucyl-tRNA(Leu) + AMP + diphosphate. The sequence is that of Leucine--tRNA ligase from Mycoplasma mycoides subsp. mycoides SC (strain CCUG 32753 / NCTC 10114 / PG1).